Consider the following 141-residue polypeptide: Large ribosomal subunit protein uL14 (141 aa).

This sequence belongs to the universal ribosomal protein uL14 family. Part of the 50S ribosomal subunit. Forms a cluster with proteins L3 and L24e, part of which may contact the 16S rRNA in 2 intersubunit bridges.

Its function is as follows. Binds to 23S rRNA. Forms part of two intersubunit bridges in the 70S ribosome. The protein is Large ribosomal subunit protein uL14 of Thermofilum pendens (strain DSM 2475 / Hrk 5).